Consider the following 1400-residue polypeptide: Clustered mitochondria protein homolog (1400 aa).

Disordered regions lie at residues 1 to 39 (MVSK…KEAS), 56 to 78 (GHDQ…QAED), and 212 to 243 (GDTG…KERP). A compositionally biased stretch (basic and acidic residues) spans 56-69 (GHDQAEEADSKQDG). A Clu domain is found at 380-622 (RAEDAYTSRL…RTFPPDLNFL (243 aa)). The segment at 684 to 741 (AALQDSNAAGAGSENKPLALESCDGTPDSPTSSESTLTPEDSEATTVSENSSAENQEA) is disordered. The span at 707–722 (DGTPDSPTSSESTLTP) shows a compositional bias: low complexity. Residues 727-741 (ATTVSENSSAENQEA) show a composition bias toward polar residues. TPR repeat units follow at residues 1088-1121 (AFHF…FNNV), 1130-1163 (CACL…SERV), 1172-1205 (IQEY…MLVV), and 1214-1247 (ALLD…NTKY). Over residues 1377-1388 (QDSGKIQEQQGS) the composition is skewed to polar residues. The tract at residues 1377-1400 (QDSGKIQEQQGSHLELDDKLPVDD) is disordered. Over residues 1390-1400 (LELDDKLPVDD) the composition is skewed to basic and acidic residues.

This sequence belongs to the CLU family.

It is found in the cytoplasm. MRNA-binding protein involved in proper cytoplasmic distribution of mitochondria. In Danio rerio (Zebrafish), this protein is Clustered mitochondria protein homolog.